A 314-amino-acid chain; its full sequence is MAFLEVGNHTAVTEFILLGLTDDPVLRVVLFTIILCIYLVTVMGNLSTILLIRVSSQLHHPMYFFLSHLASVDMGLSSSVTPNMLLNFLIERNTISYLGCGIQQSLADFFGSVECFLLAAMAYDRFMAICNPLLYSTKMSTKVCVQLVVGSYIGGFLNASLIMFYFFSFLFCGPNRVDHFFCDFAPLVELSCSDVSVSVIVISFSAGSVTMITVFVIAVSYSYILITILKMHSIEGRHKAFSTCTSHLTAVTLYYGTITFIYVMPKSSFSTDQNKVVSVFYMVMIPMLNPLIYSLRNNEIKGAIKRQLGKKMSC.

The Extracellular portion of the chain corresponds to 1–28; that stretch reads MAFLEVGNHTAVTEFILLGLTDDPVLRV. The N-linked (GlcNAc...) asparagine glycan is linked to Asn8. Residues 29-49 traverse the membrane as a helical segment; it reads VLFTIILCIYLVTVMGNLSTI. The Cytoplasmic segment spans residues 50 to 57; sequence LLIRVSSQ. Residues 58 to 78 traverse the membrane as a helical segment; the sequence is LHHPMYFFLSHLASVDMGLSS. Residues 79 to 102 lie on the Extracellular side of the membrane; that stretch reads SVTPNMLLNFLIERNTISYLGCGI. Residues Cys100 and Cys192 are joined by a disulfide bond. A helical membrane pass occupies residues 103–123; sequence QQSLADFFGSVECFLLAAMAY. Topologically, residues 124-136 are cytoplasmic; it reads DRFMAICNPLLYS. A helical membrane pass occupies residues 137–157; sequence TKMSTKVCVQLVVGSYIGGFL. Residues 158 to 199 lie on the Extracellular side of the membrane; that stretch reads NASLIMFYFFSFLFCGPNRVDHFFCDFAPLVELSCSDVSVSV. Residues 200–220 traverse the membrane as a helical segment; it reads IVISFSAGSVTMITVFVIAVS. Residues 221 to 240 lie on the Cytoplasmic side of the membrane; it reads YSYILITILKMHSIEGRHKA. The helical transmembrane segment at 241-261 threads the bilayer; sequence FSTCTSHLTAVTLYYGTITFI. At 262-274 the chain is on the extracellular side; sequence YVMPKSSFSTDQN. Residues 275–295 traverse the membrane as a helical segment; that stretch reads KVVSVFYMVMIPMLNPLIYSL. Over 296–314 the chain is Cytoplasmic; sequence RNNEIKGAIKRQLGKKMSC.

The protein belongs to the G-protein coupled receptor 1 family.

The protein resides in the cell membrane. Its function is as follows. Potential odorant receptor. This chain is Olfactory receptor 5P72, found in Mus musculus (Mouse).